A 152-amino-acid chain; its full sequence is CASP-like protein 5B1 (152 aa).

Residues 1–11 (MKKMIGSPGTM) are Cytoplasmic-facing. The helical transmembrane segment at 12–32 (SGLILRLGQCATAAASIGVMV) threads the bilayer. At 33–42 (SSYDFSNYTA) the chain is on the extracellular side. The N-linked (GlcNAc...) asparagine glycan is linked to asparagine 39. A helical transmembrane segment spans residues 43 to 63 (FCFLVASMGLQLIWSFGLACL). Over 64–77 (DVYAIRRKSDLRSP) the chain is Cytoplasmic. A helical membrane pass occupies residues 78–98 (ILLSLFTVGDWVTALLALAAA). The Extracellular segment spans residues 99-131 (CSSAGVTVLFTKDTEFCRQQPALSCDRFQISVG). A helical transmembrane segment spans residues 132-152 (LSFFNWFLAAISSHTMFWILI).

The protein belongs to the Casparian strip membrane proteins (CASP) family. In terms of assembly, homodimer and heterodimers. As to expression, expressed in leaves, exclusively in hair cells (e.g. differentiated trichomes and immature cells).

Its subcellular location is the cell membrane. The protein is CASP-like protein 5B1 of Arabidopsis thaliana (Mouse-ear cress).